The primary structure comprises 122 residues: Crustacean hyperglycemic hormones 7 (122 aa).

The first 26 residues, 1-26 (MSLAMTAFRMMAVALVVVVASSTTWA), serve as a signal peptide directing secretion. Cystine bridges form between Cys55-Cys91, Cys71-Cys87, and Cys74-Cys100. Val120 is subject to Valine amide.

The protein belongs to the arthropod CHH/MIH/GIH/VIH hormone family. In terms of tissue distribution, produced by the medulla terminalis X-organ in the eyestalks and transported to the sinus gland where they are stored and released.

The protein localises to the secreted. In terms of biological role, hormone found in the sinus gland of isopods and decapods which controls the blood sugar level. Has a secretagogue action over the amylase released from the midgut gland. May act as a stress hormone and may be involved in the control of molting and reproduction. In Penaeus japonicus (Kuruma prawn), this protein is Crustacean hyperglycemic hormones 7.